Reading from the N-terminus, the 212-residue chain is 3-isopropylmalate dehydratase small subunit (212 aa).

It belongs to the LeuD family. LeuD type 1 subfamily. Heterodimer of LeuC and LeuD.

It carries out the reaction (2R,3S)-3-isopropylmalate = (2S)-2-isopropylmalate. It participates in amino-acid biosynthesis; L-leucine biosynthesis; L-leucine from 3-methyl-2-oxobutanoate: step 2/4. Its function is as follows. Catalyzes the isomerization between 2-isopropylmalate and 3-isopropylmalate, via the formation of 2-isopropylmaleate. This Laribacter hongkongensis (strain HLHK9) protein is 3-isopropylmalate dehydratase small subunit.